A 561-amino-acid polypeptide reads, in one-letter code: Putative transport protein YbjL (561 aa).

5 consecutive transmembrane segments (helical) span residues 8–28, 32–52, 66–86, 94–114, and 158–178; these read LLNG…LCLG, LGSI…LLGQ, FMLF…SIFF, MLAL…GKLF, and NLSL…IVGA. RCK C-terminal domains lie at 200–288 and 292–373; these read RGLD…SFRN and VFDR…RIGF. 6 helical membrane-spanning segments follow: residues 383–403, 406–426, 451–471, 475–495, 503–523, and 540–560; these read LLAF…TFQF, FSFG…LGFM, VFMA…LGAI, MLIA…LFGA, ALLF…EIIS, and AIAN…CPGL.

The protein belongs to the AAE transporter (TC 2.A.81) family. YbjL subfamily.

The protein resides in the cell membrane. The polypeptide is Putative transport protein YbjL (Shigella dysenteriae serotype 1 (strain Sd197)).